The following is a 432-amino-acid chain: Eukaryotic translation initiation factor 3 subunit E (432 aa).

A PCI domain is found at 221-401 (VYYNYPKGRD…MGVKSVSIHE (181 aa)).

The protein belongs to the eIF-3 subunit E family. As to quaternary structure, component of the eukaryotic translation initiation factor 3 (eIF-3) complex.

It localises to the cytoplasm. Component of the eukaryotic translation initiation factor 3 (eIF-3) complex, which is involved in protein synthesis of a specialized repertoire of mRNAs and, together with other initiation factors, stimulates binding of mRNA and methionyl-tRNAi to the 40S ribosome. The eIF-3 complex specifically targets and initiates translation of a subset of mRNAs involved in cell proliferation. The polypeptide is Eukaryotic translation initiation factor 3 subunit E (Caenorhabditis elegans).